The following is a 404-amino-acid chain: MDYSEIMVRHGELSTKGKNRMRFINKLKNNIQDVLAPFPAIAVRSDRDRTHVSLNGTDYQPIVEALKLVFGVQALSPVYKLEKSVPLLVTAVQDIMTSLYRDGLTFKIATKRSDHAFELDSRELNSLLGGAVFEVLPNIQAQMKHPDVTLKVEIRDEAAYISYEEIKGAGGLPVGTSGKGMLMLSGGIDSPVAGYLALKRGLDIEVVHFASPPYTSPGALAKAQDLTRRLTRFGGNIQFIEVPFTEIQEEIKNKAPEAYLMTLTRRFMMRITDAIREQRKGLVIVNGESLGQVASQTLESMQAINAVTSTPIIRPVVTMDKLEIIEMAQAIDTFDISIQPFEDCCTIFAPDRPKTNPKLGNAEKYEERFDIDGLVQRAVSGIVVTEITPEIVNDEVENLIDALL.

In terms of domain architecture, THUMP spans Gln-60–Glu-165. Residues Met-183 to Leu-184, His-208 to Phe-209, Arg-265, Gly-287, and Gln-296 each bind ATP.

This sequence belongs to the ThiI family.

Its subcellular location is the cytoplasm. It carries out the reaction [ThiI sulfur-carrier protein]-S-sulfanyl-L-cysteine + a uridine in tRNA + 2 reduced [2Fe-2S]-[ferredoxin] + ATP + H(+) = [ThiI sulfur-carrier protein]-L-cysteine + a 4-thiouridine in tRNA + 2 oxidized [2Fe-2S]-[ferredoxin] + AMP + diphosphate. It catalyses the reaction [ThiS sulfur-carrier protein]-C-terminal Gly-Gly-AMP + S-sulfanyl-L-cysteinyl-[cysteine desulfurase] + AH2 = [ThiS sulfur-carrier protein]-C-terminal-Gly-aminoethanethioate + L-cysteinyl-[cysteine desulfurase] + A + AMP + 2 H(+). It participates in cofactor biosynthesis; thiamine diphosphate biosynthesis. Functionally, catalyzes the ATP-dependent transfer of a sulfur to tRNA to produce 4-thiouridine in position 8 of tRNAs, which functions as a near-UV photosensor. Also catalyzes the transfer of sulfur to the sulfur carrier protein ThiS, forming ThiS-thiocarboxylate. This is a step in the synthesis of thiazole, in the thiamine biosynthesis pathway. The sulfur is donated as persulfide by IscS. The protein is Probable tRNA sulfurtransferase of Streptococcus pyogenes serotype M12 (strain MGAS2096).